Reading from the N-terminus, the 276-residue chain is 2-dehydro-3-deoxyphosphooctonate aldolase (276 aa).

This sequence belongs to the KdsA family.

It is found in the cytoplasm. It catalyses the reaction D-arabinose 5-phosphate + phosphoenolpyruvate + H2O = 3-deoxy-alpha-D-manno-2-octulosonate-8-phosphate + phosphate. It participates in carbohydrate biosynthesis; 3-deoxy-D-manno-octulosonate biosynthesis; 3-deoxy-D-manno-octulosonate from D-ribulose 5-phosphate: step 2/3. The protein operates within bacterial outer membrane biogenesis; lipopolysaccharide biosynthesis. This chain is 2-dehydro-3-deoxyphosphooctonate aldolase, found in Xanthomonas oryzae pv. oryzae (strain MAFF 311018).